A 190-amino-acid chain; its full sequence is dCTP deaminase (190 aa).

DCTP contacts are provided by residues 111–116 (KSTYAR), 135–137 (TLE), Q156, Y172, and Q182. The active-site Proton donor/acceptor is the E137.

This sequence belongs to the dCTP deaminase family. In terms of assembly, homotrimer.

It catalyses the reaction dCTP + H2O + H(+) = dUTP + NH4(+). It functions in the pathway pyrimidine metabolism; dUMP biosynthesis; dUMP from dCTP (dUTP route): step 1/2. Functionally, catalyzes the deamination of dCTP to dUTP. The sequence is that of dCTP deaminase from Stenotrophomonas maltophilia (strain R551-3).